Consider the following 1040-residue polypeptide: uncharacterized protein (1040 aa).

Residues 403–588 (RLEESSKKGG…YSLIKFLRIK (186 aa)) enclose the Helicase ATP-binding domain. 416–423 (DDMGLGKT) serves as a coordination point for ATP. Residues 746–798 (CSLCMDVVAELLIIVPCGHFLCRECLTHVITSSEDMAKQTSNENISPKCSVCE) form an RING-type zinc finger. A Helicase C-terminal domain is found at 866–1032 (KIEKALNAVK…ISRLNTKELS (167 aa)).

It belongs to the SNF2/RAD54 helicase family.

The protein resides in the nucleus. This is an uncharacterized protein from Schizosaccharomyces pombe (strain 972 / ATCC 24843) (Fission yeast).